The chain runs to 101 residues: Small ribosomal subunit protein uS14 (101 aa).

The segment covering 1–11 has biased composition (basic and acidic residues); sequence MAKKSAIETNE. Residues 1 to 20 are disordered; the sequence is MAKKSAIETNERRRKLATGH.

This sequence belongs to the universal ribosomal protein uS14 family. In terms of assembly, part of the 30S ribosomal subunit. Contacts proteins S3 and S10.

Functionally, binds 16S rRNA, required for the assembly of 30S particles and may also be responsible for determining the conformation of the 16S rRNA at the A site. The sequence is that of Small ribosomal subunit protein uS14 from Xanthobacter autotrophicus (strain ATCC BAA-1158 / Py2).